Reading from the N-terminus, the 632-residue chain is PAN2-PAN3 deadenylation complex subunit PAN3 (632 aa).

Disordered regions lie at residues M1–L22 and P99–L127. Basic residues predominate over residues M107–Q116. The span at S117–L127 shows a compositional bias: polar residues. A pseudokinase domain region spans residues K223–G494. ATP is bound by residues R270, D321–T328, and N397–K398. Residues G495–T533 adopt a coiled-coil conformation. Residues V534–R632 are knob domain.

The protein belongs to the protein kinase superfamily. PAN3 family. In terms of assembly, homodimer. Forms a heterotrimer with a catalytic subunit PAN2 to form the poly(A)-nuclease (PAN) deadenylation complex. Interacts (via PAM-2 motif) with poly(A)-binding protein (via PABC domain), conferring substrate specificity of the enzyme complex. Interacts with the GW182 family protein ain-1. In terms of tissue distribution, highly expressed in germ cells.

It localises to the cytoplasm. Its subcellular location is the P-body. Regulatory subunit of the poly(A)-nuclease (PAN) deadenylation complex, one of two cytoplasmic mRNA deadenylases involved in general and miRNA-mediated mRNA turnover. PAN specifically shortens poly(A) tails of RNA and the activity is stimulated by poly(A)-binding protein (PABP). PAN deadenylation is followed by rapid degradation of the shortened mRNA tails by the CCR4-NOT complex. Deadenylated mRNAs are then degraded by two alternative mechanisms, namely exosome-mediated 3'-5' exonucleolytic degradation, or deadenylation-dependent mRNA decaping and subsequent 5'-3' exonucleolytic degradation by XRN1. PAN3 acts as a positive regulator for PAN activity, recruiting the catalytic subunit PAN2 to mRNA via its interaction with RNA and PABP, and to miRNA targets via its interaction with GW182 family proteins. Within the PAN complex, may positively regulate fertility. In Caenorhabditis elegans, this protein is PAN2-PAN3 deadenylation complex subunit PAN3.